The primary structure comprises 106 residues: Large ribosomal subunit protein bL21 (106 aa).

This sequence belongs to the bacterial ribosomal protein bL21 family. Part of the 50S ribosomal subunit. Contacts protein L20.

Functionally, this protein binds to 23S rRNA in the presence of protein L20. The chain is Large ribosomal subunit protein bL21 from Xanthomonas euvesicatoria pv. vesicatoria (strain 85-10) (Xanthomonas campestris pv. vesicatoria).